Reading from the N-terminus, the 427-residue chain is MRTTMSNLPKELVEDIVSRVPLHCLRAMRLTCKNWNALLESQSFKKMHIRKEEEAARELGENRMIVMMDYNVYLMGIIVNENLSIKSLGKLTCLHGSKQVKISQVFHCEGLLLCILKDDDTKIVVLNPYLGQTRWIQTRKYHRTSEWEGRDVYNYALRYETNSGNRSPKILRFIDDFHHHPENPALRYETYDFDTDLWTTLDVSPHWRIISRCGGVSLNGNTYWGAVERNASAYIGHMICFDFTRGGFGPLIPLPFKARGLVFAPLSSDRAEKIAALFRTSKKVVIWITTKIDATNVTWSNFFTIYISNLERNLSCKSFFTIYISNLERNLSCKSFFIDMEKKVAMVFDKEKGKKVAHNIINIIGEAGCVRKLVLKESGDKSCWPLVCSYVPSTVQIKQHNRGKRQKKVIRKGIDIDMRHDKRIKVD.

The F-box domain maps to 2-47 (RTTMSNLPKELVEDIVSRVPLHCLRAMRLTCKNWNALLESQSFKKM).

The chain is Putative F-box protein At4g10740 from Arabidopsis thaliana (Mouse-ear cress).